The sequence spans 505 residues: Endoglucanase 5 (505 aa).

Positions 1–31 (MWMRRNQIVRKLTLGVVTTVLGMSLSFSALS) are cleaved as a signal peptide. The catalytic stretch occupies residues 32 to 334 (ATPVETHGQL…REQIRAGANL (303 aa)). Substrate is bound by residues His64, 68–69 (WF), Tyr95, and His130. Glu168 serves as the catalytic Proton donor. Tyr230 provides a ligand contact to substrate. The Nucleophile role is filled by Glu256. Substrate contacts are provided by residues 262–263 (AS), Trp290, and 295–297 (KSE). The interval 332–355 (ANLGGGDTPTTPTEPTNPGNGTTG) is disordered. Residues 335 to 352 (GGGDTPTTPTEPTNPGNG) are linker. Residues 339–355 (TPTTPTEPTNPGNGTTG) show a composition bias toward low complexity. In terms of domain architecture, CBM3 spans 353 to 505 (TTGDVVLQYR…KGTLVWGVEP (153 aa)).

Belongs to the glycosyl hydrolase 5 (cellulase A) family.

Its subcellular location is the secreted. It catalyses the reaction Endohydrolysis of (1-&gt;4)-beta-D-glucosidic linkages in cellulose, lichenin and cereal beta-D-glucans.. Its function is as follows. Endoglucanase with some exoglucanase activity. In Pectobacterium carotovorum subsp. carotovorum (Erwinia carotovora subsp. carotovora), this protein is Endoglucanase 5 (celV).